The sequence spans 265 residues: MSDLISQNLNMIFKTPKGETVHALKDVNFTLKKGELLTVLGPSGCGKTTLLNITAGFLRPTSGAIALNGNEIDGPGVERGMVFQQGALFEWLTVAENVDFGLRMKKEDPVKTAKKVEEWLNIVGLQGFGNTPTYQLSGGMQQRVALARCLINDPDLILMDEPLGALDALTREKMQSLVLKIWKETGKTIILITHSVEEALLLGERLYVMAPRPGRIHKEYNLPFASMGIDGDLREIKKTPNFVSTREEILTMIWNMEEEIMGKDI.

One can recognise an ABC transporter domain in the interval 7-236; that stretch reads QNLNMIFKTP…MGIDGDLREI (230 aa). 41–48 is an ATP binding site; it reads GPSGCGKT.

The protein belongs to the ABC transporter superfamily. Taurine importer (TC 3.A.1.17.1) family. In terms of assembly, the complex is composed of two ATP-binding proteins (TauB), two transmembrane proteins (TauC) and a solute-binding protein (TauA).

Its subcellular location is the cell inner membrane. The enzyme catalyses taurine(out) + ATP + H2O = taurine(in) + ADP + phosphate + H(+). Functionally, part of the ABC transporter complex TauABC involved in taurine import. Responsible for energy coupling to the transport system. The chain is Taurine import ATP-binding protein TauB from Pelagibacter ubique (strain HTCC1062).